Here is a 264-residue protein sequence, read N- to C-terminus: Osteopontin (264 aa).

The first 16 residues, Met-1–Ala-16, serve as a signal peptide directing secretion. Disordered regions lie at residues Lys-21–Ser-141 and Ile-166–Arg-264. Over residues Ser-31–Asp-51 the composition is skewed to basic and acidic residues. Residues Ser-52–Tyr-73 are compositionally biased toward polar residues. Residues Ala-97–Val-118 show a composition bias toward acidic residues. N-linked (GlcNAc...) asparagine glycosylation is found at Asn-106 and Asn-109. The short motif at Arg-132 to Asp-134 is the Cell attachment site element. Over residues Lys-186–Ser-212 the composition is skewed to basic and acidic residues. 2 N-linked (GlcNAc...) asparagine glycosylation sites follow: Asn-204 and Asn-242. The segment covering Ala-233–Glu-246 has biased composition (polar residues). The span at Glu-252–Arg-264 shows a compositional bias: basic and acidic residues.

This sequence belongs to the osteopontin family. Post-translationally, extensively phosphorylated on serine residues.

Its subcellular location is the secreted. Functionally, major non-collagenous bone protein that binds tightly to hydroxyapatite. Appears to form an integral part of the mineralized matrix. Probably important to cell-matrix interaction. Acts as a cytokine involved in enhancing production of interferon-gamma and interleukin-12 and reducing production of interleukin-10 and is essential in the pathway that leads to type I immunity. The polypeptide is Osteopontin (SPP1) (Gallus gallus (Chicken)).